We begin with the raw amino-acid sequence, 134 residues long: MPKSYTDELAEWVESRAAKKRRRDEAAVAFLAVRADVEAALASGYALVTIWEHMRETGKVKFSYETFRSHARRHIKAKPADVPAPQAKAAEPAPAPKTPEPRRPKQGGKAEKPAPAAAPTGFTFNPTPDKKDLL.

Residues 74 to 134 are disordered; the sequence is HIKAKPADVP…NPTPDKKDLL (61 aa). Residues 83 to 92 are compositionally biased toward low complexity; sequence PAPQAKAAEP. The segment covering 99 to 112 has biased composition (basic and acidic residues); it reads PEPRRPKQGGKAEK.

The chain is Protein TraK (traK) from Escherichia coli.